We begin with the raw amino-acid sequence, 290 residues long: Dual-specificity RNA pseudouridine synthase RluF (290 aa).

The S4 RNA-binding domain occupies 7–72; that stretch reads VRLNKYISES…EAEDLVLIAL (66 aa). 2 interaction with RNA regions span residues 105-108 and 187-190; these read RLDK and RQIR. Residue Asp107 is the Nucleophile of the active site. Residues 243 to 290 are disordered; that stretch reads VKPKAKAKPKTAGIKRPVVKMEKTAEKGGRPASNGKRFTSPGRKKKGR. Over residues 261 to 271 the composition is skewed to basic and acidic residues; the sequence is VKMEKTAEKGG.

The protein belongs to the pseudouridine synthase RsuA family. Monomer.

The catalysed reaction is uridine(2604) in 23S rRNA = pseudouridine(2604) in 23S rRNA. It carries out the reaction uridine(35) in tRNA(Tyr) = pseudouridine(35) in tRNA(Tyr). Its function is as follows. Dual specificity enzyme that catalyzes the synthesis of pseudouridine from uracil-2604 in 23S ribosomal RNA and from uracil-35 in the anticodon of tRNA(Tyr). Can, to a small extent, also react with uracil-2605. The protein is Dual-specificity RNA pseudouridine synthase RluF (rluF) of Escherichia coli (strain K12).